The chain runs to 180 residues: Dual-action ribosomal maturation protein DarP (180 aa).

This sequence belongs to the DarP family.

Its subcellular location is the cytoplasm. In terms of biological role, member of a network of 50S ribosomal subunit biogenesis factors which assembles along the 30S-50S interface, preventing incorrect 23S rRNA structures from forming. Promotes peptidyl transferase center (PTC) maturation. This Chromobacterium violaceum (strain ATCC 12472 / DSM 30191 / JCM 1249 / CCUG 213 / NBRC 12614 / NCIMB 9131 / NCTC 9757 / MK) protein is Dual-action ribosomal maturation protein DarP.